The sequence spans 159 residues: Trafficking protein particle complex subunit 6A (159 aa).

Phosphoserine is present on Ser33.

This sequence belongs to the TRAPP small subunits family. BET3 subfamily. Part of the multisubunit transport protein particle (TRAPP) complex. Heterodimer with TRAPPC3. The heterodimer TRAPPC3-TRAPPC6A interacts with TRAPPC2L. Interacts with TRAPPC2L.

Its subcellular location is the golgi apparatus. The protein localises to the cis-Golgi network. It localises to the endoplasmic reticulum. In terms of biological role, may play a role in vesicular transport during the biogenesis of melanosomes. This Homo sapiens (Human) protein is Trafficking protein particle complex subunit 6A.